A 215-amino-acid chain; its full sequence is N-(5'-phosphoribosyl)anthranilate isomerase (215 aa).

It belongs to the TrpF family.

It carries out the reaction N-(5-phospho-beta-D-ribosyl)anthranilate = 1-(2-carboxyphenylamino)-1-deoxy-D-ribulose 5-phosphate. The protein operates within amino-acid biosynthesis; L-tryptophan biosynthesis; L-tryptophan from chorismate: step 3/5. The polypeptide is N-(5'-phosphoribosyl)anthranilate isomerase (Ruegeria sp. (strain TM1040) (Silicibacter sp.)).